The primary structure comprises 220 residues: Demethylmenaquinone methyltransferase (220 aa).

Residues Thr47, Asp67, and 93-94 (DA) contribute to the S-adenosyl-L-methionine site.

The protein belongs to the class I-like SAM-binding methyltransferase superfamily. MenG/UbiE family.

It catalyses the reaction a 2-demethylmenaquinol + S-adenosyl-L-methionine = a menaquinol + S-adenosyl-L-homocysteine + H(+). It functions in the pathway quinol/quinone metabolism; menaquinone biosynthesis; menaquinol from 1,4-dihydroxy-2-naphthoate: step 2/2. Its function is as follows. Methyltransferase required for the conversion of demethylmenaquinol (DMKH2) to menaquinol (MKH2). In Thermus thermophilus (strain ATCC BAA-163 / DSM 7039 / HB27), this protein is Demethylmenaquinone methyltransferase.